Consider the following 102-residue polypeptide: Small ribosomal subunit protein uS10 (102 aa).

The protein belongs to the universal ribosomal protein uS10 family. Part of the 30S ribosomal subunit.

Its function is as follows. Involved in the binding of tRNA to the ribosomes. This Syntrophotalea carbinolica (strain DSM 2380 / NBRC 103641 / GraBd1) (Pelobacter carbinolicus) protein is Small ribosomal subunit protein uS10.